Here is a 597-residue protein sequence, read N- to C-terminus: Aspartate--tRNA(Asp/Asn) ligase (597 aa).

Glutamate 172 contributes to the L-aspartate binding site. The segment at 196–199 (QLFK) is aspartate. Position 218 (arginine 218) interacts with L-aspartate. Residues 218-220 (RDE) and glutamine 227 each bind ATP. Histidine 454 contributes to the L-aspartate binding site. Glutamate 488 is an ATP binding site. Arginine 495 provides a ligand contact to L-aspartate. An ATP-binding site is contributed by 540-543 (GLDR).

The protein belongs to the class-II aminoacyl-tRNA synthetase family. Type 1 subfamily. As to quaternary structure, homodimer.

It localises to the cytoplasm. The enzyme catalyses tRNA(Asx) + L-aspartate + ATP = L-aspartyl-tRNA(Asx) + AMP + diphosphate. Functionally, aspartyl-tRNA synthetase with relaxed tRNA specificity since it is able to aspartylate not only its cognate tRNA(Asp) but also tRNA(Asn). Reaction proceeds in two steps: L-aspartate is first activated by ATP to form Asp-AMP and then transferred to the acceptor end of tRNA(Asp/Asn). The chain is Aspartate--tRNA(Asp/Asn) ligase from Chromobacterium violaceum (strain ATCC 12472 / DSM 30191 / JCM 1249 / CCUG 213 / NBRC 12614 / NCIMB 9131 / NCTC 9757 / MK).